The sequence spans 447 residues: N-succinylarginine dihydrolase (447 aa).

Substrate-binding positions include 19–28, Asn110, and 137–138; these read AGLSVGNKAS and HR. Glu174 is an active-site residue. Arg213 provides a ligand contact to substrate. Residue His249 is part of the active site. Residues Asp251 and Asn365 each contribute to the substrate site. The Nucleophile role is filled by Cys371.

Belongs to the succinylarginine dihydrolase family. As to quaternary structure, homodimer.

The enzyme catalyses N(2)-succinyl-L-arginine + 2 H2O + 2 H(+) = N(2)-succinyl-L-ornithine + 2 NH4(+) + CO2. It participates in amino-acid degradation; L-arginine degradation via AST pathway; L-glutamate and succinate from L-arginine: step 2/5. Functionally, catalyzes the hydrolysis of N(2)-succinylarginine into N(2)-succinylornithine, ammonia and CO(2). This chain is N-succinylarginine dihydrolase, found in Photorhabdus laumondii subsp. laumondii (strain DSM 15139 / CIP 105565 / TT01) (Photorhabdus luminescens subsp. laumondii).